A 343-amino-acid polypeptide reads, in one-letter code: uncharacterized protein (343 aa).

Residue 33–40 participates in ATP binding; the sequence is GPKSSGKS.

The protein belongs to the archaeal ATPase family.

This is an uncharacterized protein from Methanocaldococcus jannaschii (strain ATCC 43067 / DSM 2661 / JAL-1 / JCM 10045 / NBRC 100440) (Methanococcus jannaschii).